Consider the following 157-residue polypeptide: Crossover junction endodeoxyribonuclease RuvC (157 aa).

Catalysis depends on residues Asp7, Glu66, and Asp139. Residues Asp7, Glu66, and Asp139 each contribute to the Mg(2+) site.

Belongs to the RuvC family. In terms of assembly, homodimer which binds Holliday junction (HJ) DNA. The HJ becomes 2-fold symmetrical on binding to RuvC with unstacked arms; it has a different conformation from HJ DNA in complex with RuvA. In the full resolvosome a probable DNA-RuvA(4)-RuvB(12)-RuvC(2) complex forms which resolves the HJ. It depends on Mg(2+) as a cofactor.

Its subcellular location is the cytoplasm. It carries out the reaction Endonucleolytic cleavage at a junction such as a reciprocal single-stranded crossover between two homologous DNA duplexes (Holliday junction).. In terms of biological role, the RuvA-RuvB-RuvC complex processes Holliday junction (HJ) DNA during genetic recombination and DNA repair. Endonuclease that resolves HJ intermediates. Cleaves cruciform DNA by making single-stranded nicks across the HJ at symmetrical positions within the homologous arms, yielding a 5'-phosphate and a 3'-hydroxyl group; requires a central core of homology in the junction. The consensus cleavage sequence is 5'-(A/T)TT(C/G)-3'. Cleavage occurs on the 3'-side of the TT dinucleotide at the point of strand exchange. HJ branch migration catalyzed by RuvA-RuvB allows RuvC to scan DNA until it finds its consensus sequence, where it cleaves and resolves the cruciform DNA. Its function is as follows. Required for efficient infection in a mouse model system. This is Crossover junction endodeoxyribonuclease RuvC from Helicobacter pylori (strain G27).